The chain runs to 67 residues: Sodium channel neurotoxin MeuNaTxalpha-10 (67 aa).

Positions 2–66 (RDGYIAKPHN…VPIRIPGKCH (65 aa)) constitute an LCN-type CS-alpha/beta domain. Intrachain disulfides connect cysteine 12/cysteine 65, cysteine 16/cysteine 38, cysteine 24/cysteine 48, and cysteine 28/cysteine 50. A propeptide (removed by a carboxypeptidase) is located at residue arginine 67.

This sequence belongs to the long (4 C-C) scorpion toxin superfamily. Sodium channel inhibitor family. Alpha subfamily. As to expression, expressed by the venom gland.

Its subcellular location is the secreted. In terms of biological role, alpha toxins bind voltage-independently at site-3 of sodium channels (Nav) and inhibit the inactivation of the activated channels, thereby blocking neuronal transmission. This is Sodium channel neurotoxin MeuNaTxalpha-10 from Mesobuthus eupeus (Lesser Asian scorpion).